Here is a 399-residue protein sequence, read N- to C-terminus: Formate-dependent phosphoribosylglycinamide formyltransferase (399 aa).

Residues 8–9 and Glu-68 each bind N(1)-(5-phospho-beta-D-ribosyl)glycinamide; that span reads EL. ATP is bound by residues Arg-100, Lys-141, 146-151, 185-188, and Glu-193; these read SSGHGQ and EALA. The ATP-grasp domain maps to 105–308; the sequence is VLAHEELGLP…EFALHARAIL (204 aa). Mg(2+) is bound by residues Glu-266 and Glu-279. N(1)-(5-phospho-beta-D-ribosyl)glycinamide-binding positions include Asp-286, Lys-361, and 368–369; that span reads RR.

The protein belongs to the PurK/PurT family. Homodimer.

It catalyses the reaction N(1)-(5-phospho-beta-D-ribosyl)glycinamide + formate + ATP = N(2)-formyl-N(1)-(5-phospho-beta-D-ribosyl)glycinamide + ADP + phosphate + H(+). It functions in the pathway purine metabolism; IMP biosynthesis via de novo pathway; N(2)-formyl-N(1)-(5-phospho-D-ribosyl)glycinamide from N(1)-(5-phospho-D-ribosyl)glycinamide (formate route): step 1/1. Involved in the de novo purine biosynthesis. Catalyzes the transfer of formate to 5-phospho-ribosyl-glycinamide (GAR), producing 5-phospho-ribosyl-N-formylglycinamide (FGAR). Formate is provided by PurU via hydrolysis of 10-formyl-tetrahydrofolate. This Bifidobacterium longum (strain NCC 2705) protein is Formate-dependent phosphoribosylglycinamide formyltransferase.